A 586-amino-acid chain; its full sequence is MAPISIADIVAALPAEDTWGPVTSADNMLDGVPYAPFSKGDKLGRMADWTADSKDRDRGGRQAYNRNYRDQQVYGAGSSSLFAVQVAEDESTFSVVDNTRTSAKRTFGRGGGTVFRGRAQRGGAGQRGGRAGFQRVGAGRGQGGDRYYDNRGARGNRGRRFGWKDYDKPQRTREPSVNIRPDWSMLEEVDFNRLSKLNLQAPEGEDVDTYGFLYYYDRSYDKAPVKNAERRLQALDRAAYNVTTSQDPVIQELAEKNQATIFATSDILSMLMCAPRSVYSWDIVIVHQGNKIYFDKREGASLDLVTVNENAADAPLEVAESSGKQESINTPSALALEATFINHNFALQTVVEANNAKVDFNHPNPFYNAEEETEPLASKGYKYRRFDLSLESDEEPLNMIVRTEVDALVKNPVNGEDQQLVVKALNEFDSKAQGSGGSLDWRSKLYSQRGAVVATEMKNNSCKLARWTTQAILAKADGMKLGFVSRANPRSAAAHVVLGVAGYKPREFAAQMNLNLGNGWGIVRTIVDRIRALDADEEEDKVTKYILVKDPNRPVLRLYSVPANAFEEDDEAAEEEQEAKGEVEEA.

Positions 107–154 are disordered; the sequence is FGRGGGTVFRGRAQRGGAGQRGGRAGFQRVGAGRGQGGDRYYDNRGAR. Gly residues predominate over residues 108–131; that stretch reads GRGGGTVFRGRAQRGGAGQRGGRA. Residues 301-315 are RNA gate; that stretch reads SLDLVTVNENAADAP. Residues 566–577 are compositionally biased toward acidic residues; that stretch reads FEEDDEAAEEEQ. Residues 566-586 are disordered; sequence FEEDDEAAEEEQEAKGEVEEA.

The protein belongs to the eIF-3 subunit D family. In terms of assembly, component of the eukaryotic translation initiation factor 3 (eIF-3) complex.

Its subcellular location is the cytoplasm. In terms of biological role, mRNA cap-binding component of the eukaryotic translation initiation factor 3 (eIF-3) complex, which is involved in protein synthesis of a specialized repertoire of mRNAs and, together with other initiation factors, stimulates binding of mRNA and methionyl-tRNAi to the 40S ribosome. The eIF-3 complex specifically targets and initiates translation of a subset of mRNAs involved in cell proliferation. In the eIF-3 complex, eif3d specifically recognizes and binds the 7-methylguanosine cap of a subset of mRNAs. This is Eukaryotic translation initiation factor 3 subunit D from Emericella nidulans (strain FGSC A4 / ATCC 38163 / CBS 112.46 / NRRL 194 / M139) (Aspergillus nidulans).